The primary structure comprises 1556 residues: uncharacterized protein (1556 aa).

At S2 the chain carries N-acetylserine. Over residues N145 to K156 the composition is skewed to basic and acidic residues. Positions N145–D170 are disordered. The region spanning S378 to P583 is the Helicase ATP-binding domain. E391–T398 is an ATP binding site. Position 810 is a phosphoserine (S810). Residues S810 to M850 are disordered. 2 stretches are compositionally biased toward basic and acidic residues: residues M817 to S827 and R834 to N846. The segment at C1239–K1277 adopts an RING-type zinc-finger fold. Residues R1297–A1309 are compositionally biased toward basic and acidic residues. Disordered regions lie at residues R1297–N1319 and E1508–E1534. Residues D1310–N1319 are compositionally biased toward low complexity. The region spanning K1363–A1531 is the Helicase C-terminal domain. Basic and acidic residues predominate over residues E1508 to E1518. Acidic residues predominate over residues A1519 to D1529.

Belongs to the SNF2/RAD54 helicase family.

It localises to the nucleus. In terms of biological role, is probably involved in a pathway contributing to genomic integrity. This is an uncharacterized protein from Saccharomyces cerevisiae (strain ATCC 204508 / S288c) (Baker's yeast).